We begin with the raw amino-acid sequence, 322 residues long: 4-hydroxy-3-methylbut-2-enyl diphosphate reductase (322 aa).

Cysteine 15 provides a ligand contact to [4Fe-4S] cluster. 2 residues coordinate (2E)-4-hydroxy-3-methylbut-2-enyl diphosphate: histidine 44 and histidine 77. Positions 44 and 77 each coordinate dimethylallyl diphosphate. Histidine 44 and histidine 77 together coordinate isopentenyl diphosphate. Cysteine 99 serves as a coordination point for [4Fe-4S] cluster. Residue histidine 127 coordinates (2E)-4-hydroxy-3-methylbut-2-enyl diphosphate. Position 127 (histidine 127) interacts with dimethylallyl diphosphate. Isopentenyl diphosphate is bound at residue histidine 127. Glutamate 129 (proton donor) is an active-site residue. Position 168 (threonine 168) interacts with (2E)-4-hydroxy-3-methylbut-2-enyl diphosphate. Position 198 (cysteine 198) interacts with [4Fe-4S] cluster. The (2E)-4-hydroxy-3-methylbut-2-enyl diphosphate site is built by serine 226, serine 227, asparagine 228, and serine 270. Serine 226, serine 227, asparagine 228, and serine 270 together coordinate dimethylallyl diphosphate. Positions 226, 227, 228, and 270 each coordinate isopentenyl diphosphate.

The protein belongs to the IspH family. It depends on [4Fe-4S] cluster as a cofactor.

The catalysed reaction is isopentenyl diphosphate + 2 oxidized [2Fe-2S]-[ferredoxin] + H2O = (2E)-4-hydroxy-3-methylbut-2-enyl diphosphate + 2 reduced [2Fe-2S]-[ferredoxin] + 2 H(+). The enzyme catalyses dimethylallyl diphosphate + 2 oxidized [2Fe-2S]-[ferredoxin] + H2O = (2E)-4-hydroxy-3-methylbut-2-enyl diphosphate + 2 reduced [2Fe-2S]-[ferredoxin] + 2 H(+). It functions in the pathway isoprenoid biosynthesis; dimethylallyl diphosphate biosynthesis; dimethylallyl diphosphate from (2E)-4-hydroxy-3-methylbutenyl diphosphate: step 1/1. It participates in isoprenoid biosynthesis; isopentenyl diphosphate biosynthesis via DXP pathway; isopentenyl diphosphate from 1-deoxy-D-xylulose 5-phosphate: step 6/6. Its function is as follows. Catalyzes the conversion of 1-hydroxy-2-methyl-2-(E)-butenyl 4-diphosphate (HMBPP) into a mixture of isopentenyl diphosphate (IPP) and dimethylallyl diphosphate (DMAPP). Acts in the terminal step of the DOXP/MEP pathway for isoprenoid precursor biosynthesis. The protein is 4-hydroxy-3-methylbut-2-enyl diphosphate reductase of Neisseria meningitidis serogroup A / serotype 4A (strain DSM 15465 / Z2491).